A 126-amino-acid polypeptide reads, in one-letter code: Aspartate 1-decarboxylase (126 aa).

The active-site Schiff-base intermediate with substrate; via pyruvic acid is S25. Position 25 is a pyruvic acid (Ser) (S25). Residue T57 participates in substrate binding. Y58 (proton donor) is an active-site residue. G73 to A75 lines the substrate pocket.

The protein belongs to the PanD family. In terms of assembly, heterooctamer of four alpha and four beta subunits. Pyruvate is required as a cofactor. Is synthesized initially as an inactive proenzyme, which is activated by self-cleavage at a specific serine bond to produce a beta-subunit with a hydroxyl group at its C-terminus and an alpha-subunit with a pyruvoyl group at its N-terminus.

It localises to the cytoplasm. It carries out the reaction L-aspartate + H(+) = beta-alanine + CO2. The protein operates within cofactor biosynthesis; (R)-pantothenate biosynthesis; beta-alanine from L-aspartate: step 1/1. Functionally, catalyzes the pyruvoyl-dependent decarboxylation of aspartate to produce beta-alanine. This Xylella fastidiosa (strain Temecula1 / ATCC 700964) protein is Aspartate 1-decarboxylase.